We begin with the raw amino-acid sequence, 356 residues long: MAKSKKIVFTGGGTVGHVTLNLILIPKFLKDGWEVHYIGDKHGIEHEQIDKSGLDVTFHSIATGKLRRYFSWQNMLDVFKVGWGILQSIAIIAKIRPQALFSKGGFVSVPPVIASKLLRVPVYVHESDLSMGLANKIAYKFATTMFTTFEQSKTLVKTRHVGAITKVGMTRFDNSDQLDKIKEQFDEKLKTVLFIGGSTGAKVFNDFISKTPELIENYNIINISGDSSLNTLERHLYRVDYVTDLYQPLMDMADLVVTRGGSNTIFELLAMKKLHLIVPLGKEASRGDQLENADYFERKGYARQLQEPELSWETLKHELEQLVEHAETYKEAMAKSEEITSPDDFYNLLVTSISNK.

UDP-N-acetyl-alpha-D-glucosamine is bound by residues S198 and Q289.

Belongs to the glycosyltransferase 28 family. MurG subfamily.

Its subcellular location is the cell membrane. The catalysed reaction is Mur2Ac(oyl-L-Ala-gamma-D-Glu-L-Lys-D-Ala-D-Ala)-di-trans,octa-cis-undecaprenyl diphosphate + UDP-N-acetyl-alpha-D-glucosamine = beta-D-GlcNAc-(1-&gt;4)-Mur2Ac(oyl-L-Ala-gamma-D-Glu-L-Lys-D-Ala-D-Ala)-di-trans,octa-cis-undecaprenyl diphosphate + UDP + H(+). It participates in cell wall biogenesis; peptidoglycan biosynthesis. Functionally, cell wall formation. Catalyzes the transfer of a GlcNAc subunit on undecaprenyl-pyrophosphoryl-MurNAc-pentapeptide (lipid intermediate I) to form undecaprenyl-pyrophosphoryl-MurNAc-(pentapeptide)GlcNAc (lipid intermediate II). This chain is UDP-N-acetylglucosamine--N-acetylmuramyl-(pentapeptide) pyrophosphoryl-undecaprenol N-acetylglucosamine transferase, found in Streptococcus thermophilus (strain ATCC BAA-491 / LMD-9).